We begin with the raw amino-acid sequence, 289 residues long: 26S proteasome non-ATPase regulatory subunit 8 (289 aa).

Phosphoserine is present on Ser-45. Positions 101–270 (PSFERYMAQL…QQKPEDTTIP (170 aa)) constitute a PCI domain. Lys-236 participates in a covalent cross-link: Glycyl lysine isopeptide (Lys-Gly) (interchain with G-Cter in SUMO2).

The protein belongs to the proteasome subunit S14 family. In terms of assembly, component of the 19S proteasome regulatory particle complex. The 26S proteasome consists of a 20S core particle (CP) and two 19S regulatory subunits (RP). The regulatory particle is made of a lid composed of 9 subunits including PSMD8, a base containing 6 ATPases and few additional components. Interacts with DDI2. Interacts with TASOR.

Component of the 26S proteasome, a multiprotein complex involved in the ATP-dependent degradation of ubiquitinated proteins. This complex plays a key role in the maintenance of protein homeostasis by removing misfolded or damaged proteins, which could impair cellular functions, and by removing proteins whose functions are no longer required. Therefore, the proteasome participates in numerous cellular processes, including cell cycle progression, apoptosis, or DNA damage repair. The sequence is that of 26S proteasome non-ATPase regulatory subunit 8 (PSMD8) from Pongo abelii (Sumatran orangutan).